A 104-amino-acid polypeptide reads, in one-letter code: Large ribosomal subunit protein uL24 (104 aa).

This sequence belongs to the universal ribosomal protein uL24 family. Part of the 50S ribosomal subunit.

Functionally, one of two assembly initiator proteins, it binds directly to the 5'-end of the 23S rRNA, where it nucleates assembly of the 50S subunit. One of the proteins that surrounds the polypeptide exit tunnel on the outside of the subunit. This Photobacterium profundum (strain SS9) protein is Large ribosomal subunit protein uL24.